We begin with the raw amino-acid sequence, 218 residues long: Phosphoribosylformylglycinamidine synthase subunit PurQ (218 aa).

The 217-residue stretch at 2-218 folds into the Glutamine amidotransferase type-1 domain; that stretch reads TIGIVVFPGS…IKILQALLSN (217 aa). Cys-86 acts as the Nucleophile in catalysis. Active-site residues include His-194 and Glu-196.

As to quaternary structure, part of the FGAM synthase complex composed of 1 PurL, 1 PurQ and 2 PurS subunits.

The protein resides in the cytoplasm. The catalysed reaction is N(2)-formyl-N(1)-(5-phospho-beta-D-ribosyl)glycinamide + L-glutamine + ATP + H2O = 2-formamido-N(1)-(5-O-phospho-beta-D-ribosyl)acetamidine + L-glutamate + ADP + phosphate + H(+). It catalyses the reaction L-glutamine + H2O = L-glutamate + NH4(+). It functions in the pathway purine metabolism; IMP biosynthesis via de novo pathway; 5-amino-1-(5-phospho-D-ribosyl)imidazole from N(2)-formyl-N(1)-(5-phospho-D-ribosyl)glycinamide: step 1/2. Functionally, part of the phosphoribosylformylglycinamidine synthase complex involved in the purines biosynthetic pathway. Catalyzes the ATP-dependent conversion of formylglycinamide ribonucleotide (FGAR) and glutamine to yield formylglycinamidine ribonucleotide (FGAM) and glutamate. The FGAM synthase complex is composed of three subunits. PurQ produces an ammonia molecule by converting glutamine to glutamate. PurL transfers the ammonia molecule to FGAR to form FGAM in an ATP-dependent manner. PurS interacts with PurQ and PurL and is thought to assist in the transfer of the ammonia molecule from PurQ to PurL. The chain is Phosphoribosylformylglycinamidine synthase subunit PurQ from Prochlorococcus marinus (strain SARG / CCMP1375 / SS120).